Reading from the N-terminus, the 121-residue chain is NADH-quinone oxidoreductase subunit 7 (121 aa).

3 helical membrane-spanning segments follow: residues 11–31 (ILVF…AAAV), 65–85 (LVSI…PWAV), and 93–113 (VAFW…AYEW).

It belongs to the complex I subunit 3 family. NDH-1 is composed of at least 14 different subunits, Nqo1 to Nqo14. The complex has a L-shaped structure, with the hydrophobic arm (subunits Nqo7, Nqo8, Nqo10 to Nqo14) embedded in the inner membrane and the hydrophilic peripheral arm (subunits Nqo1 to Nqo6, Nqo9) protruding into the bacterial cytoplasm. The hydrophilic domain contains all the redox centers.

It localises to the cell inner membrane. The catalysed reaction is a quinone + NADH + 5 H(+)(in) = a quinol + NAD(+) + 4 H(+)(out). In terms of biological role, NDH-1 shuttles electrons from NADH, via FMN and iron-sulfur (Fe-S) centers, to quinones in the respiratory chain. The immediate electron acceptor for the enzyme in this species is believed to be ubiquinone. Couples the redox reaction to proton translocation (for every two electrons transferred, four hydrogen ions are translocated across the cytoplasmic membrane), and thus conserves the redox energy in a proton gradient. This chain is NADH-quinone oxidoreductase subunit 7 (nqo7), found in Paracoccus denitrificans.